Reading from the N-terminus, the 603-residue chain is Phosphoribosylformylglycinamidine synthase subunit PurL (603 aa).

The active site involves H32. ATP-binding residues include Y35 and K68. E70 lines the Mg(2+) pocket. Substrate contacts are provided by residues S71 to H74 and R93. The Proton acceptor role is filled by H72. D94 contributes to the Mg(2+) binding site. Residues D107 and G136 to R139 contribute to the ATP site. G189 and Q208 together coordinate substrate. D236 is a binding site for Mg(2+). Residue E280–Q282 coordinates substrate. Positions 388, 429, 442, and 477 each coordinate ATP. A Mg(2+)-binding site is contributed by N478. S480 lines the substrate pocket. Positions 549 and 556 each coordinate ATP.

The protein belongs to the FGAMS family. In terms of assembly, monomer. Part of the FGAM synthase complex composed of 1 PurL, 1 PurQ and 2 PurS subunits.

It is found in the cytoplasm. The enzyme catalyses N(2)-formyl-N(1)-(5-phospho-beta-D-ribosyl)glycinamide + L-glutamine + ATP + H2O = 2-formamido-N(1)-(5-O-phospho-beta-D-ribosyl)acetamidine + L-glutamate + ADP + phosphate + H(+). Its pathway is purine metabolism; IMP biosynthesis via de novo pathway; 5-amino-1-(5-phospho-D-ribosyl)imidazole from N(2)-formyl-N(1)-(5-phospho-D-ribosyl)glycinamide: step 1/2. In terms of biological role, part of the phosphoribosylformylglycinamidine synthase complex involved in the purines biosynthetic pathway. Catalyzes the ATP-dependent conversion of formylglycinamide ribonucleotide (FGAR) and glutamine to yield formylglycinamidine ribonucleotide (FGAM) and glutamate. The FGAM synthase complex is composed of three subunits. PurQ produces an ammonia molecule by converting glutamine to glutamate. PurL transfers the ammonia molecule to FGAR to form FGAM in an ATP-dependent manner. PurS interacts with PurQ and PurL and is thought to assist in the transfer of the ammonia molecule from PurQ to PurL. The chain is Phosphoribosylformylglycinamidine synthase subunit PurL from Thermotoga maritima (strain ATCC 43589 / DSM 3109 / JCM 10099 / NBRC 100826 / MSB8).